The following is a 356-amino-acid chain: Chorismate synthase (356 aa).

The NADP(+) site is built by Arg-48 and Arg-54. Residues 125–127 (RSS), 237–238 (NA), Gly-282, 297–301 (KPTSS), and Arg-323 contribute to the FMN site.

Belongs to the chorismate synthase family. Homotetramer. The cofactor is FMNH2.

It catalyses the reaction 5-O-(1-carboxyvinyl)-3-phosphoshikimate = chorismate + phosphate. The protein operates within metabolic intermediate biosynthesis; chorismate biosynthesis; chorismate from D-erythrose 4-phosphate and phosphoenolpyruvate: step 7/7. Functionally, catalyzes the anti-1,4-elimination of the C-3 phosphate and the C-6 proR hydrogen from 5-enolpyruvylshikimate-3-phosphate (EPSP) to yield chorismate, which is the branch point compound that serves as the starting substrate for the three terminal pathways of aromatic amino acid biosynthesis. This reaction introduces a second double bond into the aromatic ring system. The protein is Chorismate synthase of Rhizorhabdus wittichii (strain DSM 6014 / CCUG 31198 / JCM 15750 / NBRC 105917 / EY 4224 / RW1) (Sphingomonas wittichii).